Reading from the N-terminus, the 628-residue chain is MSKLWLLLLLVAAFQAVHSYPAAESDYLEEPETTWDILKETWGKMKDHYLNLGKETLAKLKELKENYKTWGKEKKQQFIATLKDKLCTPQDFEEDIDYAESDEDKDLSFTMKVLLILKETLDKLKAAVGEEKEKLIQEVKGLRAKICDKLSDYEEEEEFELEEDYEEDPETTWGILKEAWGKMKEHYLNLGKATLAKLKELKENYKTWGKEKLQIFVAKLKDKLCTQQDFEEDIDYTESDEEKDPALTAKILLKLKEYLEKLKSAAGKEKEKLIQKIKDLRAKICDKLSDYEEEEEEEEEEEFELEEDYEEDPQQTTWGILKETFGKIKDRWSQLTKIQLQKIIQVLKNRYCADQNDFEDDVAESDEEQGGRQVIQKYLQKLKEFYEKIKAAVGAKKEELKKRLEETRQKFCAKLNAAAEQNDLEEDEDEERGWLGKLGKGLKKVGKKFVKKMSSAMKAGCKKGMKMLKDNAVKVTPLVCEEKTCKTLVTILTYSCGMQYTITRTNKATYLEVAFIVNGEVKAKKNVKLGDVPSCVNLGALLGKICLKGIEGKGKSSSGQANVNFCLAILADKYNVGCKFCASYANKKFKVLPPKMFSGAQDDNGEILQASDNGEDGILLDADEFEID.

The first 19 residues, Met1–Ser19, serve as a signal peptide directing secretion. The propeptide occupies Tyr20–Glu368. The segment at Asp290–Pro313 is disordered. Positions Tyr291–Pro313 are enriched in acidic residues.

Belongs to the redulysin-like family. In terms of processing, contains 5 disulfide bonds. Expressed by the venom gland (posterior main gland) (at protein level).

The protein localises to the secreted. Its function is as follows. Highly abundant protein that may be responsible for the observed disruption of sensory neuron membranes, since it is homologous to proteins such as trialysin, which forms pores in lipid bilayers. Probable insecticidal toxin. The chain is Venom redulysin 1 from Platymeris rhadamanthus (Red spot assassin bug).